Consider the following 850-residue polypeptide: Bifunctional uridylyltransferase/uridylyl-removing enzyme (850 aa).

The interval 1-317 (MSARPFADLR…LFPVVAPPLP (317 aa)) is uridylyltransferase. Residues 318–673 (IDDDFQLRAG…ARLSPAGEGI (356 aa)) form a uridylyl-removing region. The HD domain maps to 436–558 (VDEHILTVLR…VGDTRRLDAL (123 aa)). ACT domains lie at 674–755 (QVMV…AVQP) and 783–850 (VLSI…GVLG).

The protein belongs to the GlnD family. It depends on Mg(2+) as a cofactor.

It carries out the reaction [protein-PII]-L-tyrosine + UTP = [protein-PII]-uridylyl-L-tyrosine + diphosphate. The catalysed reaction is [protein-PII]-uridylyl-L-tyrosine + H2O = [protein-PII]-L-tyrosine + UMP + H(+). Uridylyltransferase (UTase) activity is inhibited by glutamine, while glutamine activates uridylyl-removing (UR) activity. Modifies, by uridylylation and deuridylylation, the PII regulatory proteins (GlnB and homologs), in response to the nitrogen status of the cell that GlnD senses through the glutamine level. Under low glutamine levels, catalyzes the conversion of the PII proteins and UTP to PII-UMP and PPi, while under higher glutamine levels, GlnD hydrolyzes PII-UMP to PII and UMP (deuridylylation). Thus, controls uridylylation state and activity of the PII proteins, and plays an important role in the regulation of nitrogen assimilation and metabolism. The sequence is that of Bifunctional uridylyltransferase/uridylyl-removing enzyme from Thiobacillus denitrificans (strain ATCC 25259 / T1).